The chain runs to 156 residues: Large ribosomal subunit protein uL15 (156 aa).

Over residues 1 to 16 the composition is skewed to basic residues; sequence MVRRFKRGTKYRRGSR. Residues 1 to 37 form a disordered region; the sequence is MVRRFKRGTKYRRGSRTHGWGRVGQHRKSGGSGGKGM.

Belongs to the universal ribosomal protein uL15 family. In terms of assembly, part of the 50S ribosomal subunit.

Binds to the 23S rRNA. The sequence is that of Large ribosomal subunit protein uL15 from Pyrobaculum aerophilum (strain ATCC 51768 / DSM 7523 / JCM 9630 / CIP 104966 / NBRC 100827 / IM2).